Here is a 345-residue protein sequence, read N- to C-terminus: Carbamoyl phosphate synthase small chain (345 aa).

The interval 1-169 (MKKYLVMEDG…FVKGEEGGTV (169 aa)) is CPSase. Residues S45, G213, and G215 each contribute to the L-glutamine site. Residues 168–345 (TVLFIDLGSK…GEMKRRIGYA (178 aa)) enclose the Glutamine amidotransferase type-1 domain. C242 (nucleophile) is an active-site residue. L-glutamine contacts are provided by F243, Q246, N282, G284, and Y285. Active-site residues include H321 and E323.

Belongs to the CarA family. As to quaternary structure, composed of two chains; the small (or glutamine) chain promotes the hydrolysis of glutamine to ammonia, which is used by the large (or ammonia) chain to synthesize carbamoyl phosphate. Tetramer of heterodimers (alpha,beta)4.

The enzyme catalyses hydrogencarbonate + L-glutamine + 2 ATP + H2O = carbamoyl phosphate + L-glutamate + 2 ADP + phosphate + 2 H(+). The catalysed reaction is L-glutamine + H2O = L-glutamate + NH4(+). Its pathway is amino-acid biosynthesis; L-arginine biosynthesis; carbamoyl phosphate from bicarbonate: step 1/1. It functions in the pathway pyrimidine metabolism; UMP biosynthesis via de novo pathway; (S)-dihydroorotate from bicarbonate: step 1/3. Functionally, small subunit of the glutamine-dependent carbamoyl phosphate synthetase (CPSase). CPSase catalyzes the formation of carbamoyl phosphate from the ammonia moiety of glutamine, carbonate, and phosphate donated by ATP, constituting the first step of 2 biosynthetic pathways, one leading to arginine and/or urea and the other to pyrimidine nucleotides. The small subunit (glutamine amidotransferase) binds and cleaves glutamine to supply the large subunit with the substrate ammonia. This chain is Carbamoyl phosphate synthase small chain, found in Thermoplasma volcanium (strain ATCC 51530 / DSM 4299 / JCM 9571 / NBRC 15438 / GSS1).